The following is a 542-amino-acid chain: Chaperonin GroEL 2 (542 aa).

Residues 30 to 33 (TLGP), Lys-51, 87 to 91 (DGTTT), Gly-415, and Asp-496 each bind ATP.

It belongs to the chaperonin (HSP60) family. Forms a cylinder of 14 subunits composed of two heptameric rings stacked back-to-back. Interacts with the co-chaperonin GroES.

The protein resides in the cytoplasm. The enzyme catalyses ATP + H2O + a folded polypeptide = ADP + phosphate + an unfolded polypeptide.. In terms of biological role, together with its co-chaperonin GroES, plays an essential role in assisting protein folding. The GroEL-GroES system forms a nano-cage that allows encapsulation of the non-native substrate proteins and provides a physical environment optimized to promote and accelerate protein folding. The protein is Chaperonin GroEL 2 of Cereibacter sphaeroides (strain ATCC 17023 / DSM 158 / JCM 6121 / CCUG 31486 / LMG 2827 / NBRC 12203 / NCIMB 8253 / ATH 2.4.1.) (Rhodobacter sphaeroides).